The sequence spans 386 residues: MNLHEYQAKALLRAAGIKTPRGIIIKNSVEAKEAAQQLGGNRWVVKAQIHSGGRGKAGGIKTAQTLDEVHHISAAMLGSRLKTEQSSADGLPINEVLIEEECRAIATYYLALTLDRPRQQIVFIASMAGGTEIETVAETNPEAIIYAGVNPAIGFSPYLSARVGGALQLDKSYQLPLTKLMNRLYQLFIDNDLTLLELNPLIITEDHEFLPLDAKISIDDNALFRHQELVDLRDTTQEDHRETQAQELQLNYVPLDGTIGCIANGAGLAMATMDIIKLYGGEPANFLDVGGDATSERVKQAFKLILTSSRIKSILVNIFGGIVRCDLIADGIIQAAKEIDLKIPVIVRLQGNNVDLGRKMLDECPLNLQAADDLIDAAQKAIAAAQ.

One can recognise an ATP-grasp domain in the interval 9-244; that stretch reads KALLRAAGIK…TTQEDHRETQ (236 aa). ATP is bound by residues Lys46, 53-55, Glu100, and Arg103; that span reads GRG. 2 residues coordinate Mg(2+): Asn199 and Asp213. Residues Asn264 and 321–323 contribute to the substrate site; that span reads GIV.

This sequence belongs to the succinate/malate CoA ligase beta subunit family. Heterotetramer of two alpha and two beta subunits. Mg(2+) is required as a cofactor.

The catalysed reaction is succinate + ATP + CoA = succinyl-CoA + ADP + phosphate. It catalyses the reaction GTP + succinate + CoA = succinyl-CoA + GDP + phosphate. The protein operates within carbohydrate metabolism; tricarboxylic acid cycle; succinate from succinyl-CoA (ligase route): step 1/1. Its function is as follows. Succinyl-CoA synthetase functions in the citric acid cycle (TCA), coupling the hydrolysis of succinyl-CoA to the synthesis of either ATP or GTP and thus represents the only step of substrate-level phosphorylation in the TCA. The beta subunit provides nucleotide specificity of the enzyme and binds the substrate succinate, while the binding sites for coenzyme A and phosphate are found in the alpha subunit. In Dichelobacter nodosus (strain VCS1703A), this protein is Succinate--CoA ligase [ADP-forming] subunit beta.